The primary structure comprises 215 residues: dITP/XTP pyrophosphatase (215 aa).

13–18 (THNTGK) lines the substrate pocket. D74 functions as the Proton acceptor in the catalytic mechanism. D74 is a Mg(2+) binding site. Residues S75, 163-166 (FGFD), K186, and 199-200 (HR) contribute to the substrate site.

It belongs to the HAM1 NTPase family. Homodimer. It depends on Mg(2+) as a cofactor.

It carries out the reaction XTP + H2O = XMP + diphosphate + H(+). It catalyses the reaction dITP + H2O = dIMP + diphosphate + H(+). The enzyme catalyses ITP + H2O = IMP + diphosphate + H(+). Pyrophosphatase that catalyzes the hydrolysis of nucleoside triphosphates to their monophosphate derivatives, with a high preference for the non-canonical purine nucleotides XTP (xanthosine triphosphate), dITP (deoxyinosine triphosphate) and ITP. Seems to function as a house-cleaning enzyme that removes non-canonical purine nucleotides from the nucleotide pool, thus preventing their incorporation into DNA/RNA and avoiding chromosomal lesions. The polypeptide is dITP/XTP pyrophosphatase (Bartonella quintana (strain Toulouse) (Rochalimaea quintana)).